Reading from the N-terminus, the 532-residue chain is Bone morphogenetic protein receptor type-1A (532 aa).

The N-terminal stretch at 1–23 is a signal peptide; it reads MPQLYIYIRLLGAYLFIISRVQG. Topologically, residues 24 to 152 are extracellular; sequence QNLDSMLHGT…IGPFFDGSIR (129 aa). Disulfide bonds link Cys-61-Cys-82, Cys-63-Cys-67, and Cys-76-Cys-100. Asn-73 carries an N-linked (GlcNAc...) asparagine glycan. The mediates specificity for BMP ligand stretch occupies residues 107–109; the sequence is DFQ. 2 disulfide bridges follow: Cys-110/Cys-124 and Cys-125/Cys-130. Residues 153-176 traverse the membrane as a helical segment; sequence WLVLLISMAVCIIAMIIFSSCFCY. Residues 177–532 lie on the Cytoplasmic side of the membrane; that stretch reads KHYCKSISSR…KMVESQDVKI (356 aa). A GS domain is found at 204-233; that stretch reads ESLKDLIDQSQSSGSGSGLPLLVQRTIAKQ. Residues 234 to 525 form the Protein kinase domain; the sequence is IQMVRQVGKG…RIKKTLAKMV (292 aa). ATP is bound by residues 240 to 248 and Lys-261; that span reads VGKGRYGEV. Asp-362 (proton acceptor) is an active-site residue.

This sequence belongs to the protein kinase superfamily. TKL Ser/Thr protein kinase family. TGFB receptor subfamily. Interacts with low affinity with GDF5; positively regulates chondrocyte differentiation. Interacts with BMP4. Interacts with SCUBE3. Interacts with TSC22D1/TSC-22. Interacts with BMP2; the interaction may induce HAMP expression. Interacts with BMP6. Interacts with heterodimers composed of BMP2 and BMP6 in vitro; the interaction may induce HAMP expression. Interacts with TGFBR3. Requires Mg(2+) as cofactor. Mn(2+) is required as a cofactor. In terms of processing, glycosylated. As to expression, highly expressed in skeletal muscle.

It is found in the cell membrane. The protein resides in the cell surface. It carries out the reaction L-threonyl-[receptor-protein] + ATP = O-phospho-L-threonyl-[receptor-protein] + ADP + H(+). It catalyses the reaction L-seryl-[receptor-protein] + ATP = O-phospho-L-seryl-[receptor-protein] + ADP + H(+). In terms of biological role, on ligand binding, forms a receptor complex consisting of two type II and two type I transmembrane serine/threonine kinases. Type II receptors phosphorylate and activate type I receptors which autophosphorylate, then bind and activate SMAD transcriptional regulators. Receptor for BMP2, BMP4, GDF5 and GDF6. Positively regulates chondrocyte differentiation through GDF5 interaction. Mediates induction of adipogenesis by GDF6. May promote the expression of HAMP, potentially via its interaction with BMP2. This is Bone morphogenetic protein receptor type-1A (BMPR1A) from Homo sapiens (Human).